The sequence spans 444 residues: Type VI secretion system baseplate component TssK1 (444 aa).

In terms of assembly, forms transient higher-order structures that correlated with dynamics of sheath component TssB1. Interacts with TssA1.

Its function is as follows. Core component of the H1 type VI (H1-T6SS) secretion system that plays a role in the release of toxins targeting both eukaryotic and prokaryotic species. Functions as a spatio-temporal marker for assembly of contractile apparatus made of TssB1 and TssC1. This role in assembly depends on TssM1. This Pseudomonas aeruginosa (strain ATCC 15692 / DSM 22644 / CIP 104116 / JCM 14847 / LMG 12228 / 1C / PRS 101 / PAO1) protein is Type VI secretion system baseplate component TssK1.